We begin with the raw amino-acid sequence, 245 residues long: Biosynthetic peptidoglycan transglycosylase (245 aa).

A helical membrane pass occupies residues 20–42 (VYAGSVFAGAWLATQLFYLVQIA).

Belongs to the glycosyltransferase 51 family.

It localises to the cell inner membrane. The enzyme catalyses [GlcNAc-(1-&gt;4)-Mur2Ac(oyl-L-Ala-gamma-D-Glu-L-Lys-D-Ala-D-Ala)](n)-di-trans,octa-cis-undecaprenyl diphosphate + beta-D-GlcNAc-(1-&gt;4)-Mur2Ac(oyl-L-Ala-gamma-D-Glu-L-Lys-D-Ala-D-Ala)-di-trans,octa-cis-undecaprenyl diphosphate = [GlcNAc-(1-&gt;4)-Mur2Ac(oyl-L-Ala-gamma-D-Glu-L-Lys-D-Ala-D-Ala)](n+1)-di-trans,octa-cis-undecaprenyl diphosphate + di-trans,octa-cis-undecaprenyl diphosphate + H(+). It participates in cell wall biogenesis; peptidoglycan biosynthesis. In terms of biological role, peptidoglycan polymerase that catalyzes glycan chain elongation from lipid-linked precursors. The sequence is that of Biosynthetic peptidoglycan transglycosylase from Burkholderia ambifaria (strain ATCC BAA-244 / DSM 16087 / CCUG 44356 / LMG 19182 / AMMD) (Burkholderia cepacia (strain AMMD)).